A 102-amino-acid chain; its full sequence is Small ribosomal subunit protein uS10 (102 aa).

The protein belongs to the universal ribosomal protein uS10 family. Part of the 30S ribosomal subunit.

Functionally, involved in the binding of tRNA to the ribosomes. The polypeptide is Small ribosomal subunit protein uS10 (Paramagnetospirillum magneticum (strain ATCC 700264 / AMB-1) (Magnetospirillum magneticum)).